We begin with the raw amino-acid sequence, 117 residues long: Large ribosomal subunit protein bL20 (117 aa).

The protein belongs to the bacterial ribosomal protein bL20 family.

Binds directly to 23S ribosomal RNA and is necessary for the in vitro assembly process of the 50S ribosomal subunit. It is not involved in the protein synthesizing functions of that subunit. The protein is Large ribosomal subunit protein bL20 of Rickettsia typhi (strain ATCC VR-144 / Wilmington).